The sequence spans 449 residues: Exodeoxyribonuclease 7 large subunit (449 aa).

This sequence belongs to the XseA family. In terms of assembly, heterooligomer composed of large and small subunits.

It is found in the cytoplasm. It catalyses the reaction Exonucleolytic cleavage in either 5'- to 3'- or 3'- to 5'-direction to yield nucleoside 5'-phosphates.. Bidirectionally degrades single-stranded DNA into large acid-insoluble oligonucleotides, which are then degraded further into small acid-soluble oligonucleotides. In Lacticaseibacillus paracasei (strain ATCC 334 / BCRC 17002 / CCUG 31169 / CIP 107868 / KCTC 3260 / NRRL B-441) (Lactobacillus paracasei), this protein is Exodeoxyribonuclease 7 large subunit.